A 122-amino-acid chain; its full sequence is Large ribosomal subunit protein uL14 (122 aa).

The protein belongs to the universal ribosomal protein uL14 family. Part of the 50S ribosomal subunit. Forms a cluster with proteins L3 and L19. In the 70S ribosome, L14 and L19 interact and together make contacts with the 16S rRNA in bridges B5 and B8.

In terms of biological role, binds to 23S rRNA. Forms part of two intersubunit bridges in the 70S ribosome. In Anaeromyxobacter sp. (strain Fw109-5), this protein is Large ribosomal subunit protein uL14.